A 186-amino-acid chain; its full sequence is Imidazole glycerol phosphate synthase subunit HisH (186 aa).

In terms of domain architecture, Glutamine amidotransferase type-1 spans 1 to 186 (MIAIIDYGSG…KLLRNFGELA (186 aa)). The active-site Nucleophile is C72. Residues H167 and E169 contribute to the active site.

In terms of assembly, heterodimer of HisH and HisF.

The protein localises to the cytoplasm. The catalysed reaction is 5-[(5-phospho-1-deoxy-D-ribulos-1-ylimino)methylamino]-1-(5-phospho-beta-D-ribosyl)imidazole-4-carboxamide + L-glutamine = D-erythro-1-(imidazol-4-yl)glycerol 3-phosphate + 5-amino-1-(5-phospho-beta-D-ribosyl)imidazole-4-carboxamide + L-glutamate + H(+). The enzyme catalyses L-glutamine + H2O = L-glutamate + NH4(+). It functions in the pathway amino-acid biosynthesis; L-histidine biosynthesis; L-histidine from 5-phospho-alpha-D-ribose 1-diphosphate: step 5/9. Functionally, IGPS catalyzes the conversion of PRFAR and glutamine to IGP, AICAR and glutamate. The HisH subunit catalyzes the hydrolysis of glutamine to glutamate and ammonia as part of the synthesis of IGP and AICAR. The resulting ammonia molecule is channeled to the active site of HisF. The protein is Imidazole glycerol phosphate synthase subunit HisH of Picrophilus torridus (strain ATCC 700027 / DSM 9790 / JCM 10055 / NBRC 100828 / KAW 2/3).